The following is a 189-amino-acid chain: Selenoprotein S (189 aa).

Residues 29–49 traverse the membrane as a helical segment; the sequence is VVLSSYGWYILLGCILIYLLI. Residues 114–125 are compositionally biased toward basic and acidic residues; that stretch reads IETWDRMKEGKS. The segment at 114–189 is disordered; that stretch reads IETWDRMKEG…RRGPSSGGUG (76 aa). Positions 136 to 147 are enriched in low complexity; it reads PSPSTSTSAATK. Basic and acidic residues predominate over residues 148–157; it reads PKQEKQERKT. A non-standard amino acid (selenocysteine) is located at residue selenocysteine 188.

The protein belongs to the selenoprotein S family.

It localises to the endoplasmic reticulum membrane. The protein resides in the cytoplasm. Its function is as follows. Involved in the degradation process of misfolded endoplasmic reticulum (ER) luminal proteins. Participates in the transfer of misfolded proteins from the ER to the cytosol, where they are destroyed by the proteasome in a ubiquitin-dependent manner. This is Selenoprotein S (vimp) from Xenopus tropicalis (Western clawed frog).